The primary structure comprises 427 residues: UDP-N-acetylglucosamine 1-carboxyvinyltransferase 1 (427 aa).

23-24 (KN) is a phosphoenolpyruvate binding site. A UDP-N-acetyl-alpha-D-glucosamine-binding site is contributed by Arg-96. Cys-120 functions as the Proton donor in the catalytic mechanism. A 2-(S-cysteinyl)pyruvic acid O-phosphothioketal modification is found at Cys-120. Residues 125–129 (RPIDL), Asp-309, and Val-331 each bind UDP-N-acetyl-alpha-D-glucosamine.

It belongs to the EPSP synthase family. MurA subfamily.

The protein localises to the cytoplasm. It carries out the reaction phosphoenolpyruvate + UDP-N-acetyl-alpha-D-glucosamine = UDP-N-acetyl-3-O-(1-carboxyvinyl)-alpha-D-glucosamine + phosphate. It participates in cell wall biogenesis; peptidoglycan biosynthesis. Its function is as follows. Cell wall formation. Adds enolpyruvyl to UDP-N-acetylglucosamine. This chain is UDP-N-acetylglucosamine 1-carboxyvinyltransferase 1, found in Streptococcus pneumoniae (strain ATCC BAA-255 / R6).